A 145-amino-acid chain; its full sequence is Mediator of RNA polymerase II transcription subunit 21 (145 aa).

Residues 79–112 (EESTAALQAASLRQLEEENQEAAARLEEVVYRGD) adopt a coiled-coil conformation.

It belongs to the Mediator complex subunit 21 family. In terms of assembly, component of the Mediator complex.

Its subcellular location is the nucleus. Component of the Mediator complex, a coactivator involved in the regulated transcription of nearly all RNA polymerase II-dependent genes. Mediator functions as a bridge to convey information from gene-specific regulatory proteins to the basal RNA polymerase II transcription machinery. Mediator is recruited to promoters by direct interactions with regulatory proteins and serves as a scaffold for the assembly of a functional preinitiation complex with RNA polymerase II and the general transcription factors. This chain is Mediator of RNA polymerase II transcription subunit 21 (med21), found in Danio rerio (Zebrafish).